A 269-amino-acid chain; its full sequence is Intermembrane phospholipid transport system ATP-binding protein MlaF (269 aa).

The 237-residue stretch at 9 to 245 (VDMRDVSFTR…PDPRVRQFLD (237 aa)) folds into the ABC transporter domain. 41-48 (GPSGIGKT) contacts ATP.

The protein belongs to the ABC transporter superfamily. MlaF family. As to quaternary structure, the complex is composed of two ATP-binding proteins (MlaF), two transmembrane proteins (MlaE), two cytoplasmic solute-binding proteins (MlaB) and six periplasmic solute-binding proteins (MlaD).

It is found in the cell inner membrane. Functionally, part of the ABC transporter complex MlaFEDB, which is involved in a phospholipid transport pathway that maintains lipid asymmetry in the outer membrane by retrograde trafficking of phospholipids from the outer membrane to the inner membrane. Responsible for energy coupling to the transport system. This is Intermembrane phospholipid transport system ATP-binding protein MlaF from Escherichia coli O157:H7.